The primary structure comprises 175 residues: NADH-ubiquinone oxidoreductase chain 6 (175 aa).

5 helical membrane-spanning segments follow: residues 1 to 21 (MMTY…VGFS), 25 to 45 (SPIY…GIVL), 47 to 67 (FGGS…MLVV), 88 to 108 (AVLG…CYIL), and 149 to 169 (YGTW…LVIM).

This sequence belongs to the complex I subunit 6 family. As to quaternary structure, core subunit of respiratory chain NADH dehydrogenase (Complex I) which is composed of 45 different subunits.

Its subcellular location is the mitochondrion inner membrane. It carries out the reaction a ubiquinone + NADH + 5 H(+)(in) = a ubiquinol + NAD(+) + 4 H(+)(out). In terms of biological role, core subunit of the mitochondrial membrane respiratory chain NADH dehydrogenase (Complex I) which catalyzes electron transfer from NADH through the respiratory chain, using ubiquinone as an electron acceptor. Essential for the catalytic activity and assembly of complex I. This is NADH-ubiquinone oxidoreductase chain 6 (MT-ND6) from Phoca vitulina (Harbor seal).